A 301-amino-acid chain; its full sequence is Cuticle collagen 2 (301 aa).

Positions 1–37 are cleaved as a signal peptide; the sequence is MDIDARIKAYKFVAYSAVTFSVVAVVSVFITLPMVYN. 4 triple-helical region regions span residues 105–134, 153–176, 183–212, and 215–282; these read GPPG…PGKG, GPPG…PGSP, GPAG…PGAS, and GGPG…KGIC. The disordered stretch occupies residues 109 to 284; sequence PGGSPGKPGK…GEGEKGICPK (176 aa). 2 stretches are compositionally biased toward pro residues: residues 143–170 and 179–191; these read TQPP…PGPD and PSGP…PGPA. The segment covering 201–218 has biased composition (gly residues); it reads GAPGGPGEPGASEQGGPG. Over residues 219 to 229 the composition is skewed to pro residues; sequence EPGPAGPPGPA. Residues 252–261 show a composition bias toward low complexity; sequence PGAAGAPGAD. Positions 262–274 are enriched in gly residues; the sequence is GNPGGPGTAGKPG.

Belongs to the cuticular collagen family. Collagen polypeptide chains are complexed within the cuticle by disulfide bonds and other types of covalent cross-links. Syncytial dorsal and ventral epidermis.

Functionally, nematode cuticles are composed largely of collagen-like proteins. The cuticle functions both as an exoskeleton and as a barrier to protect the worm from its environment. The sequence is that of Cuticle collagen 2 (col-2) from Caenorhabditis elegans.